The following is a 593-amino-acid chain: Aspartate--tRNA ligase (593 aa).

An L-aspartate-binding site is contributed by Glu173. Positions 197–200 are aspartate; it reads QLFK. Arg219 contributes to the L-aspartate binding site. ATP-binding positions include 219-221 and Gln228; that span reads RDE. His449 is a binding site for L-aspartate. Glu483 provides a ligand contact to ATP. Arg490 provides a ligand contact to L-aspartate. 535-538 provides a ligand contact to ATP; sequence GLDR.

Belongs to the class-II aminoacyl-tRNA synthetase family. Type 1 subfamily. Homodimer.

It is found in the cytoplasm. The catalysed reaction is tRNA(Asp) + L-aspartate + ATP = L-aspartyl-tRNA(Asp) + AMP + diphosphate. Functionally, catalyzes the attachment of L-aspartate to tRNA(Asp) in a two-step reaction: L-aspartate is first activated by ATP to form Asp-AMP and then transferred to the acceptor end of tRNA(Asp). This Shewanella piezotolerans (strain WP3 / JCM 13877) protein is Aspartate--tRNA ligase.